A 131-amino-acid chain; its full sequence is ER membrane protein complex subunit 5 (131 aa).

Topologically, residues 1–3 (MAP) are cytoplasmic. A helical transmembrane segment spans residues 4–22 (SLWKGLVGIGLFALAHAAL). Over 23-43 (SAAQHRSYMRLTEKEDESLPI) the chain is Lumenal. A helical transmembrane segment spans residues 44–63 (DIVLQTLLAFAVTCYGIVHI). The Cytoplasmic portion of the chain corresponds to 64 to 131 (AGEFKDMDAT…KLRKLESLRR (68 aa)). Ser-120 is subject to Phosphoserine.

This sequence belongs to the membrane magnesium transporter (TC 1.A.67) family. Component of the ER membrane protein complex (EMC).

It localises to the endoplasmic reticulum membrane. It is found in the golgi apparatus membrane. The protein localises to the early endosome membrane. Its function is as follows. Part of the endoplasmic reticulum membrane protein complex (EMC) that enables the energy-independent insertion into endoplasmic reticulum membranes of newly synthesized membrane proteins. Preferentially accommodates proteins with transmembrane domains that are weakly hydrophobic or contain destabilizing features such as charged and aromatic residues. Involved in the cotranslational insertion of multi-pass membrane proteins in which stop-transfer membrane-anchor sequences become ER membrane spanning helices. It is also required for the post-translational insertion of tail-anchored/TA proteins in endoplasmic reticulum membranes. By mediating the proper cotranslational insertion of N-terminal transmembrane domains in an N-exo topology, with translocated N-terminus in the lumen of the ER, controls the topology of multi-pass membrane proteins like the G protein-coupled receptors. By regulating the insertion of various proteins in membranes, it is indirectly involved in many cellular processes. May be involved in Mg(2+) transport. In Pongo abelii (Sumatran orangutan), this protein is ER membrane protein complex subunit 5.